The following is a 91-amino-acid chain: UPF0298 protein OB1449 (91 aa).

This sequence belongs to the UPF0298 family.

Its subcellular location is the cytoplasm. The polypeptide is UPF0298 protein OB1449 (Oceanobacillus iheyensis (strain DSM 14371 / CIP 107618 / JCM 11309 / KCTC 3954 / HTE831)).